The chain runs to 461 residues: Ribulose bisphosphate carboxylase (461 aa).

Asn-112 provides a ligand contact to substrate. The active-site Proton acceptor is the Lys-167. Lys-169 contributes to the substrate binding site. Residues Lys-192, Asp-194, and Glu-195 each coordinate Mg(2+). N6-carboxylysine is present on Lys-192. His-288 (proton acceptor) is an active-site residue. Positions 289, 322, and 369 each coordinate substrate.

This sequence belongs to the RuBisCO large chain family. Type II subfamily. In terms of assembly, homodimer. Requires Mg(2+) as cofactor.

It carries out the reaction 2 (2R)-3-phosphoglycerate + 2 H(+) = D-ribulose 1,5-bisphosphate + CO2 + H2O. The enzyme catalyses D-ribulose 1,5-bisphosphate + O2 = 2-phosphoglycolate + (2R)-3-phosphoglycerate + 2 H(+). In terms of biological role, ruBisCO catalyzes two reactions: the carboxylation of D-ribulose 1,5-bisphosphate, the primary event in carbon dioxide fixation, as well as the oxidative fragmentation of the pentose substrate. Both reactions occur simultaneously and in competition at the same active site. This chain is Ribulose bisphosphate carboxylase, found in Rhodopseudomonas palustris (strain BisB5).